Consider the following 106-residue polypeptide: Venom family 8-like peptide Pr8a (106 aa).

The first 17 residues, 1-17 (MSPIAFLLPFLLQMVLS), serve as a signal peptide directing secretion.

In terms of processing, contains 2 disulfide bonds. Expressed by the venom gland (anterior main gland) (at protein level).

It localises to the secreted. The sequence is that of Venom family 8-like peptide Pr8a from Platymeris rhadamanthus (Red spot assassin bug).